The following is a 383-amino-acid chain: 8-amino-7-oxononanoate synthase (383 aa).

Arg20 is a substrate binding site. 107-108 is a binding site for pyridoxal 5'-phosphate; sequence GY. Residue His132 coordinates substrate. Pyridoxal 5'-phosphate contacts are provided by Ser178, His206, and Thr233. Lys236 is subject to N6-(pyridoxal phosphate)lysine. Thr349 is a substrate binding site.

The protein belongs to the class-II pyridoxal-phosphate-dependent aminotransferase family. BioF subfamily. Homodimer. The cofactor is pyridoxal 5'-phosphate.

It catalyses the reaction 6-carboxyhexanoyl-[ACP] + L-alanine + H(+) = (8S)-8-amino-7-oxononanoate + holo-[ACP] + CO2. The protein operates within cofactor biosynthesis; biotin biosynthesis. Its function is as follows. Catalyzes the decarboxylative condensation of pimeloyl-[acyl-carrier protein] and L-alanine to produce 8-amino-7-oxononanoate (AON), [acyl-carrier protein], and carbon dioxide. The polypeptide is 8-amino-7-oxononanoate synthase (Chromobacterium violaceum (strain ATCC 12472 / DSM 30191 / JCM 1249 / CCUG 213 / NBRC 12614 / NCIMB 9131 / NCTC 9757 / MK)).